We begin with the raw amino-acid sequence, 169 residues long: Ureidoglycolate lyase (169 aa).

This sequence belongs to the ureidoglycolate lyase family. Homodimer. Ni(2+) is required as a cofactor.

The enzyme catalyses (S)-ureidoglycolate = urea + glyoxylate. It functions in the pathway nitrogen metabolism; (S)-allantoin degradation. Functionally, catalyzes the catabolism of the allantoin degradation intermediate (S)-ureidoglycolate, generating urea and glyoxylate. Involved in the utilization of allantoin as nitrogen source. The chain is Ureidoglycolate lyase from Brucella anthropi (strain ATCC 49188 / DSM 6882 / CCUG 24695 / JCM 21032 / LMG 3331 / NBRC 15819 / NCTC 12168 / Alc 37) (Ochrobactrum anthropi).